The chain runs to 453 residues: Bifunctional protein GlmU (453 aa).

The interval 1-225 is pyrophosphorylase; that stretch reads MNIVILAAGT…EWETLGVNSK (225 aa). UDP-N-acetyl-alpha-D-glucosamine is bound by residues 6–9, Lys20, Gln71, 76–77, 98–100, Gly135, Glu150, Asn165, and Asn223; these read LAAG, GT, and YGD. Asp100 lines the Mg(2+) pocket. Asn223 serves as a coordination point for Mg(2+). Positions 226–246 are linker; the sequence is QQLAELERIHQRNVADDLLVA. The N-acetyltransferase stretch occupies residues 247–453; it reads GVTIADPARI…GYVRPTKKKS (207 aa). Arg329 and Lys347 together coordinate UDP-N-acetyl-alpha-D-glucosamine. The Proton acceptor role is filled by His359. UDP-N-acetyl-alpha-D-glucosamine-binding residues include Tyr362 and Asn373. Residues Ala376, 382–383, Ser401, and Ala419 each bind acetyl-CoA; that span reads NY.

It in the N-terminal section; belongs to the N-acetylglucosamine-1-phosphate uridyltransferase family. In the C-terminal section; belongs to the transferase hexapeptide repeat family. As to quaternary structure, homotrimer. The cofactor is Mg(2+).

The protein resides in the cytoplasm. It carries out the reaction alpha-D-glucosamine 1-phosphate + acetyl-CoA = N-acetyl-alpha-D-glucosamine 1-phosphate + CoA + H(+). The enzyme catalyses N-acetyl-alpha-D-glucosamine 1-phosphate + UTP + H(+) = UDP-N-acetyl-alpha-D-glucosamine + diphosphate. The protein operates within nucleotide-sugar biosynthesis; UDP-N-acetyl-alpha-D-glucosamine biosynthesis; N-acetyl-alpha-D-glucosamine 1-phosphate from alpha-D-glucosamine 6-phosphate (route II): step 2/2. It functions in the pathway nucleotide-sugar biosynthesis; UDP-N-acetyl-alpha-D-glucosamine biosynthesis; UDP-N-acetyl-alpha-D-glucosamine from N-acetyl-alpha-D-glucosamine 1-phosphate: step 1/1. It participates in bacterial outer membrane biogenesis; LPS lipid A biosynthesis. Functionally, catalyzes the last two sequential reactions in the de novo biosynthetic pathway for UDP-N-acetylglucosamine (UDP-GlcNAc). The C-terminal domain catalyzes the transfer of acetyl group from acetyl coenzyme A to glucosamine-1-phosphate (GlcN-1-P) to produce N-acetylglucosamine-1-phosphate (GlcNAc-1-P), which is converted into UDP-GlcNAc by the transfer of uridine 5-monophosphate (from uridine 5-triphosphate), a reaction catalyzed by the N-terminal domain. In Paraburkholderia phymatum (strain DSM 17167 / CIP 108236 / LMG 21445 / STM815) (Burkholderia phymatum), this protein is Bifunctional protein GlmU.